The primary structure comprises 203 residues: Snake venom metalloproteinase fibrolase (203 aa).

Pyrrolidone carboxylic acid is present on Q1. The Peptidase M12B domain maps to 7-203 (RYVQLVIVAD…NNPQCILNKP (197 aa)). 3 disulfide bridges follow: C118-C198, C158-C182, and C160-C165. H143 is a binding site for Zn(2+). E144 is a catalytic residue. Zn(2+) contacts are provided by H147 and H153.

Belongs to the venom metalloproteinase (M12B) family. P-I subfamily. Monomer. Zn(2+) serves as cofactor. In terms of tissue distribution, expressed by the venom gland.

The protein localises to the secreted. It catalyses the reaction Hydrolysis of 14-Ala-|-Leu-15 in insulin B chain and 413-Lys-|-Leu-414 in alpha-chain of fibrinogen.. Is inhibited by EDTA, o-phenanthroline and tetraethylenepentamine. Snake venom zinc metalloprotease that exhibits direct fibrinolytic activity. This Agkistrodon contortrix contortrix (Southern copperhead) protein is Snake venom metalloproteinase fibrolase.